We begin with the raw amino-acid sequence, 210 residues long: UPF0301 protein Mnod_6933 (210 aa).

It belongs to the UPF0301 (AlgH) family.

This Methylobacterium nodulans (strain LMG 21967 / CNCM I-2342 / ORS 2060) protein is UPF0301 protein Mnod_6933.